A 126-amino-acid chain; its full sequence is Heterotrimeric G protein gamma subunit GPG1 (126 aa).

G proteins are composed of 3 units, alpha, beta and gamma. GPG1 interacts with the beta subunits GBP1 and GPB2.

The protein localises to the cytoplasm. Functionally, gamma subunit of a guanine nucleotide-binding protein (G protein). G proteins are involved as modulators or transducers in various transmembrane signaling systems. The beta and gamma chains are required for the GTPase activity, for replacement of GDP by GTP, and for G protein-effector interaction. Involved in the determination of the cAMP level according to nutritional conditions, most probably as a regulator of cAMP phosphodiesterase. Required for the control of pseudohyphal and haploid invasive growth. This chain is Heterotrimeric G protein gamma subunit GPG1 (GPG1), found in Saccharomyces cerevisiae (strain ATCC 204508 / S288c) (Baker's yeast).